Reading from the N-terminus, the 358-residue chain is MAISRLIINHFRNLTAIDLEFERGFNFIIGNNGSGKTSLLEAIFYLGHGRSFKSAVANRIISYQQPHFILHGKIQEQQHQWSVGLQKQRQGNTLMKINGEDAKKISDLAHLLPMQLITPEGLTLLNGGPSYRRAYLDWGLFHHNASFYNAWSSLNRLLKQRNSALQQVCSYEKLKIWDRELTKLAYQVSYWREAYAEALRSEIEKTCQLFLPELEISVSFHQGWDKNMDYADLLQQNFERDRALGYTFSGPQKADFRFKANGLPVEDILSRGQLKLLMCALRLAQGEHLMQQKKRHCIFLLDDFASELDQYKRTLLAERLQKNGSQVFVTAITREQLQQIQPEKHRTFYLENGRIKDL.

30–37 lines the ATP pocket; sequence GNNGSGKT.

Belongs to the RecF family.

It localises to the cytoplasm. Functionally, the RecF protein is involved in DNA metabolism; it is required for DNA replication and normal SOS inducibility. RecF binds preferentially to single-stranded, linear DNA. It also seems to bind ATP. In Histophilus somni (strain 2336) (Haemophilus somnus), this protein is DNA replication and repair protein RecF.